Reading from the N-terminus, the 438-residue chain is UDP-N-acetylmuramate--L-alanine ligase (438 aa).

Gly-108 to Ser-114 contacts ATP.

Belongs to the MurCDEF family.

Its subcellular location is the cytoplasm. The catalysed reaction is UDP-N-acetyl-alpha-D-muramate + L-alanine + ATP = UDP-N-acetyl-alpha-D-muramoyl-L-alanine + ADP + phosphate + H(+). Its pathway is cell wall biogenesis; peptidoglycan biosynthesis. Cell wall formation. The protein is UDP-N-acetylmuramate--L-alanine ligase of Oceanobacillus iheyensis (strain DSM 14371 / CIP 107618 / JCM 11309 / KCTC 3954 / HTE831).